Consider the following 103-residue polypeptide: Cell division protein FtsB (103 aa).

The Cytoplasmic portion of the chain corresponds to 1-3 (MGK). Residues 4-21 (LTLLLLAILVWLQYSLWF) traverse the membrane as a helical segment. Residues 22–103 (GKNGIHDYTR…RAQSAGQNNR (82 aa)) are Periplasmic-facing. Residues 31–71 (RVNDDVAAQQATNAKLKARNDQLFAEIDDLNGGQEALEERA) are a coiled coil.

The protein belongs to the FtsB family. Part of a complex composed of FtsB, FtsL and FtsQ.

The protein resides in the cell inner membrane. Its function is as follows. Essential cell division protein. May link together the upstream cell division proteins, which are predominantly cytoplasmic, with the downstream cell division proteins, which are predominantly periplasmic. This is Cell division protein FtsB from Escherichia coli O157:H7.